The following is a 128-amino-acid chain: Arginine decarboxylase proenzyme (128 aa).

Ser76 serves as the catalytic Schiff-base intermediate with substrate; via pyruvic acid. Ser76 is subject to Pyruvic acid (Ser); by autocatalysis. His81 serves as the catalytic Proton acceptor; for processing activity. Residue Cys96 is the Proton donor; for catalytic activity of the active site.

This sequence belongs to the prokaryotic AdoMetDC family. Type 1 subfamily. Heterooctamer of four alpha and four beta chains arranged as a tetramer of alpha/beta heterodimers. Pyruvate serves as cofactor. Post-translationally, is synthesized initially as an inactive proenzyme. Formation of the active enzyme involves a self-maturation process in which the active site pyruvoyl group is generated from an internal serine residue via an autocatalytic post-translational modification. Two non-identical subunits are generated from the proenzyme in this reaction, and the pyruvate is formed at the N-terminus of the alpha chain, which is derived from the carboxyl end of the proenzyme. The post-translation cleavage follows an unusual pathway, termed non-hydrolytic serinolysis, in which the side chain hydroxyl group of the serine supplies its oxygen atom to form the C-terminus of the beta chain, while the remainder of the serine residue undergoes an oxidative deamination to produce ammonia and the pyruvoyl group blocking the N-terminus of the alpha chain.

The catalysed reaction is L-arginine + H(+) = agmatine + CO2. It participates in amine and polyamine biosynthesis; agmatine biosynthesis; agmatine from L-arginine: step 1/1. In terms of biological role, specifically catalyzes the decarboxylation of L-arginine to agmatine. Has no S-adenosylmethionine decarboxylase (AdoMetDC) activity. The chain is Arginine decarboxylase proenzyme from Metallosphaera sedula (strain ATCC 51363 / DSM 5348 / JCM 9185 / NBRC 15509 / TH2).